The following is an 810-amino-acid chain: Hemoglobin-haptoglobin utilization protein B (810 aa).

Residues 1 to 22 form the signal peptide; that stretch reads MPIPFKPVLAVAAIAQAFPAFA. Positions 34 to 166 constitute a TBDR plug domain; it reads NEITVTGTHK…LGGAVNYQTK (133 aa). Residues 175–810 enclose the TBDR beta-barrel domain; it reads DKPYHLGIKG…SYNFTIEAKF (636 aa). The TonB C-terminal box motif lies at 793–810; the sequence is QRFTSPGRSYNFTIEAKF.

Belongs to the TonB-dependent receptor family.

The protein resides in the cell outer membrane. Acts as a receptor for hemoglobin or the hemoglobin/haptoglobin complex and is required for heme uptake. The chain is Hemoglobin-haptoglobin utilization protein B (hpuB) from Neisseria meningitidis serogroup C.